Here is a 553-residue protein sequence, read N- to C-terminus: 2-succinyl-5-enolpyruvyl-6-hydroxy-3-cyclohexene-1-carboxylate synthase (553 aa).

It belongs to the TPP enzyme family. MenD subfamily. As to quaternary structure, homodimer. It depends on Mg(2+) as a cofactor. Requires Mn(2+) as cofactor. Thiamine diphosphate serves as cofactor.

The catalysed reaction is isochorismate + 2-oxoglutarate + H(+) = 5-enolpyruvoyl-6-hydroxy-2-succinyl-cyclohex-3-ene-1-carboxylate + CO2. It functions in the pathway quinol/quinone metabolism; 1,4-dihydroxy-2-naphthoate biosynthesis; 1,4-dihydroxy-2-naphthoate from chorismate: step 2/7. It participates in quinol/quinone metabolism; menaquinone biosynthesis. In terms of biological role, catalyzes the thiamine diphosphate-dependent decarboxylation of 2-oxoglutarate and the subsequent addition of the resulting succinic semialdehyde-thiamine pyrophosphate anion to isochorismate to yield 2-succinyl-5-enolpyruvyl-6-hydroxy-3-cyclohexene-1-carboxylate (SEPHCHC). The sequence is that of 2-succinyl-5-enolpyruvyl-6-hydroxy-3-cyclohexene-1-carboxylate synthase from Thermobifida fusca (strain YX).